Here is a 103-residue protein sequence, read N- to C-terminus: Large ribosomal subunit protein bL21 (103 aa).

It belongs to the bacterial ribosomal protein bL21 family. As to quaternary structure, part of the 50S ribosomal subunit. Contacts protein L20.

Functionally, this protein binds to 23S rRNA in the presence of protein L20. The protein is Large ribosomal subunit protein bL21 of Borreliella afzelii (strain PKo) (Borrelia afzelii).